The primary structure comprises 301 residues: Glucose-1-phosphate adenylyltransferase large subunit (301 aa).

The protein belongs to the bacterial/plant glucose-1-phosphate adenylyltransferase family. As to quaternary structure, heterotetramer.

It localises to the plastid. It is found in the chloroplast. Its subcellular location is the amyloplast. The catalysed reaction is alpha-D-glucose 1-phosphate + ATP + H(+) = ADP-alpha-D-glucose + diphosphate. Its pathway is glycan biosynthesis; starch biosynthesis. With respect to regulation, insensitive to 3'phosphoglycerate and orthophosphate. Its function is as follows. This protein plays a role in synthesis of starch. It catalyzes the synthesis of the activated glycosyl donor, ADP-glucose from Glc-1-P and ATP. This chain is Glucose-1-phosphate adenylyltransferase large subunit (AGA.1), found in Triticum aestivum (Wheat).